The sequence spans 473 residues: Mediator of RNA polymerase II transcription subunit 29 (473 aa).

Over residues methionine 1–proline 12 the composition is skewed to polar residues. 2 disordered regions span residues methionine 1–glutamine 319 and serine 444–glutamate 473. The span at glutamine 13–glutamine 50 shows a compositional bias: low complexity. Residues serine 51 to glutamine 62 are compositionally biased toward polar residues. Composition is skewed to low complexity over residues glutamine 111 to methionine 123 and valine 130 to proline 139. Composition is skewed to polar residues over residues threonine 148–histidine 183 and proline 255–serine 269. Composition is skewed to low complexity over residues alanine 272–alanine 286 and alanine 294–alanine 308.

The protein belongs to the Mediator complex subunit 29 family. As to quaternary structure, component of the Mediator complex.

It localises to the nucleus. Functionally, component of the Mediator complex, a coactivator involved in the regulated transcription of nearly all RNA polymerase II-dependent genes. Mediator functions as a bridge to convey information from gene-specific regulatory proteins to the basal RNA polymerase II transcription machinery. Mediator is recruited to promoters by direct interactions with regulatory proteins and serves as a scaffold for the assembly of a functional preinitiation complex with RNA polymerase II and the general transcription factors. The polypeptide is Mediator of RNA polymerase II transcription subunit 29 (mdt-29) (Caenorhabditis briggsae).